Reading from the N-terminus, the 484-residue chain is Glutamyl-tRNA(Gln) amidotransferase subunit A (484 aa).

Residues lysine 76 and serine 151 each act as charge relay system in the active site. The Acyl-ester intermediate role is filled by serine 175.

It belongs to the amidase family. GatA subfamily. As to quaternary structure, heterotrimer of A, B and C subunits.

The enzyme catalyses L-glutamyl-tRNA(Gln) + L-glutamine + ATP + H2O = L-glutaminyl-tRNA(Gln) + L-glutamate + ADP + phosphate + H(+). In terms of biological role, allows the formation of correctly charged Gln-tRNA(Gln) through the transamidation of misacylated Glu-tRNA(Gln) in organisms which lack glutaminyl-tRNA synthetase. The reaction takes place in the presence of glutamine and ATP through an activated gamma-phospho-Glu-tRNA(Gln). The polypeptide is Glutamyl-tRNA(Gln) amidotransferase subunit A (Hahella chejuensis (strain KCTC 2396)).